The primary structure comprises 37 residues: Cytochrome b6-f complex subunit 5 (37 aa).

The chain crosses the membrane as a helical span at residues 5-25 (FLFGIVLGLIPITLAGLFVTA).

Belongs to the PetG family. The 4 large subunits of the cytochrome b6-f complex are cytochrome b6, subunit IV (17 kDa polypeptide, PetD), cytochrome f and the Rieske protein, while the 4 small subunits are PetG, PetL, PetM and PetN. The complex functions as a dimer.

Its subcellular location is the plastid thylakoid membrane. Its function is as follows. Component of the cytochrome b6-f complex, which mediates electron transfer between photosystem II (PSII) and photosystem I (PSI), cyclic electron flow around PSI, and state transitions. PetG is required for either the stability or assembly of the cytochrome b6-f complex. The polypeptide is Cytochrome b6-f complex subunit 5 (Cuscuta reflexa (Southern Asian dodder)).